The primary structure comprises 1310 residues: PAN2-PAN3 deadenylation complex catalytic subunit pan2 (1310 aa).

WD repeat units lie at residues 22-61 (YHAG…RFTA), 67-105 (ETDG…SIRH), 106-144 (ESMQ…GEVV), and 145-184 (KELP…IKKQ). The segment at 318–463 (QFTEIGIPPR…NNDHWSLRPE (146 aa)) is linker. Residues 463–850 (EAPPEYRICE…MPVVVMFQVK (388 aa)) form the USP domain. Zn(2+)-binding residues include histidine 525, cysteine 530, cysteine 535, cysteine 538, cysteine 645, cysteine 648, cysteine 700, and cysteine 703. One can recognise an Exonuclease domain in the interval 897 to 1070 (IAIDTEFIRL…EDAQTALKLY (174 aa)). The a divalent metal cation site is built by aspartate 900, glutamate 902, aspartate 1009, and aspartate 1062. The interval 1121-1169 (TPPVPAPGTTEGSFEISNSSTATTGGSALSATGGMGSASASSSMPSTPV) is disordered. Residues 1139-1168 (SSTATTGGSALSATGGMGSASASSSMPSTP) show a composition bias toward low complexity.

It belongs to the peptidase C19 family. PAN2 subfamily. As to quaternary structure, forms a heterotrimer with an asymmetric homodimer of the regulatory subunit par-2/pan3 to form the poly(A)-nuclease (PAN) deadenylation complex. The cofactor is a divalent metal cation.

It is found in the cytoplasm. It carries out the reaction Exonucleolytic cleavage of poly(A) to 5'-AMP.. Positively regulated by the regulatory subunit par-2/pan3. Its function is as follows. Catalytic subunit of the poly(A)-nuclease (PAN) deadenylation complex, one of two cytoplasmic mRNA deadenylases involved in mRNA turnover. PAN specifically shortens poly(A) tails of RNA and the activity is stimulated by poly(A)-binding protein pabp-1. PAN deadenylation is followed by rapid degradation of the shortened mRNA tails by the CCR4-NOT complex. Deadenylated mRNAs are then degraded by two alternative mechanisms, namely exosome-mediated 3'-5' exonucleolytic degradation, or deadenylation-dependent mRNA decaping and subsequent 5'-3' exonucleolytic degradation by rgb-30/xrn1. May also be involved in post-transcriptional maturation of mRNA poly(A) tails. The sequence is that of PAN2-PAN3 deadenylation complex catalytic subunit pan2 (par-1) from Neurospora crassa (strain ATCC 24698 / 74-OR23-1A / CBS 708.71 / DSM 1257 / FGSC 987).